The primary structure comprises 235 residues: Small ribosomal subunit protein eS4 (235 aa).

One can recognise an S4 RNA-binding domain in the interval 38–99 (VTLLTIIRDY…GESYRVVYNN (62 aa)).

The protein belongs to the eukaryotic ribosomal protein eS4 family.

This Thermoplasma volcanium (strain ATCC 51530 / DSM 4299 / JCM 9571 / NBRC 15438 / GSS1) protein is Small ribosomal subunit protein eS4 (rps4e).